Consider the following 524-residue polypeptide: MKKFDNLGLDNIKEIFHNLSYDELNAHEKANNEGLSTDNDTFCVDTGIFTGRSPKDKYFVKQDPSSKYIAWGKINQPITKELFDKLLTKAKQELSGKKIYVQDAFCGASLQSRKAVRFVTEIAWQAHFVKNMFIRPSQEELENFKADFIVYNACKCINEDYKQDGLNSEVFVIFNVEENIAVIGGTWYGGEMKKGIFSMMNYWLPLENKLSMHCSANVGEKDDVALFFGLSGTGKTTLSTDPKRRLIGDDEHGWDDEGVFNFEGGCYAKTINLDPEHEPEIYGAIKRNALLENVVLRADKSVDYADASKTENTRVSYPIEHIENHEPSLKAGHPKNIIFLSADAFGILPPVSKLSKEQAMYYFLSGYTAKVAGTERGITEPQATFSACFGEPFMPLHPTVYARLLGEKIEKHEVNVYLVNTGWSGGSYGVGKRMSIKATRACINAILDGSIAKCEFENFEVFNLAIPKALEGVESTLLNPINTWLDKNAYAETRDKLAHMFVQNFKRYEDVKEGIEFSKFGPKI.

Arg52, Tyr188, and Lys194 together coordinate substrate. ATP contacts are provided by residues Lys194, His213, and 229 to 237 (GLSGTGKTT). Mn(2+) contacts are provided by Lys194 and His213. Mn(2+) is bound at residue Asp250. Residues Glu278, Arg314, and Thr439 each contribute to the ATP site. Arg314 is a substrate binding site.

The protein belongs to the phosphoenolpyruvate carboxykinase (ATP) family. Mn(2+) is required as a cofactor.

The protein resides in the cytoplasm. The enzyme catalyses oxaloacetate + ATP = phosphoenolpyruvate + ADP + CO2. It functions in the pathway carbohydrate biosynthesis; gluconeogenesis. Its function is as follows. Involved in the gluconeogenesis. Catalyzes the conversion of oxaloacetate (OAA) to phosphoenolpyruvate (PEP) through direct phosphoryl transfer between the nucleoside triphosphate and OAA. This is Phosphoenolpyruvate carboxykinase (ATP) from Campylobacter jejuni subsp. jejuni serotype O:23/36 (strain 81-176).